A 231-amino-acid chain; its full sequence is Ribonuclease 3 (231 aa).

Residues Val-8–Gly-135 form the RNase III domain. A Mg(2+)-binding site is contributed by Glu-48. Residues Asp-52 and Glu-124 contribute to the active site. Position 124 (Glu-124) interacts with Mg(2+). The region spanning Asp-161–Ala-230 is the DRBM domain. The interval Gly-210–Gly-231 is disordered. Residues Ser-212–Gly-231 are compositionally biased toward basic and acidic residues.

It belongs to the ribonuclease III family. As to quaternary structure, homodimer. It depends on Mg(2+) as a cofactor.

Its subcellular location is the cytoplasm. The enzyme catalyses Endonucleolytic cleavage to 5'-phosphomonoester.. In terms of biological role, digests double-stranded RNA. Involved in the processing of primary rRNA transcript to yield the immediate precursors to the large and small rRNAs (23S and 16S). Processes some mRNAs, and tRNAs when they are encoded in the rRNA operon. Processes pre-crRNA and tracrRNA of type II CRISPR loci if present in the organism. The chain is Ribonuclease 3 from Caulobacter vibrioides (strain ATCC 19089 / CIP 103742 / CB 15) (Caulobacter crescentus).